Here is a 105-residue protein sequence, read N- to C-terminus: UPF0235 protein RrIowa_1526 (105 aa).

It belongs to the UPF0235 family.

This is UPF0235 protein RrIowa_1526 from Rickettsia rickettsii (strain Iowa).